The chain runs to 182 residues: Cell wall protein phiA (182 aa).

The first 18 residues, 1–18 (MKLTSTAALASLAVAATA), serve as a signal peptide directing secretion. N-linked (GlcNAc...) asparagine glycans are attached at residues Asn57 and Asn107.

This sequence belongs to the phiA family. Mainly present in phialides and conidia.

Its subcellular location is the secreted. It localises to the cell wall. Cell wall protein involved in development of asexual structures such as phialide and conidium development, and thus required for spore formation. Plays a role as a general stress protectant produced by the fungus in competition with antagonistic bacteria. In Emericella nidulans (strain FGSC A4 / ATCC 38163 / CBS 112.46 / NRRL 194 / M139) (Aspergillus nidulans), this protein is Cell wall protein phiA.